Reading from the N-terminus, the 551-residue chain is Glucans biosynthesis protein D (551 aa).

The tat-type signal signal peptide spans Met1–Ala32.

This sequence belongs to the OpgD/OpgG family. Predicted to be exported by the Tat system. The position of the signal peptide cleavage has not been experimentally proven.

It is found in the periplasm. The protein operates within glycan metabolism; osmoregulated periplasmic glucan (OPG) biosynthesis. Functionally, probably involved in the control of the structural glucose backbone of osmoregulated periplasmic glucans (OPGs). In Escherichia coli O1:K1 / APEC, this protein is Glucans biosynthesis protein D.